The sequence spans 451 residues: Probable tyrosyl-DNA phosphodiesterase (451 aa).

The interval 1 to 34 is disordered; that stretch reads MKRTIQETPGPSSTTVPPPKKLNSQRNGSNLEPG. Over residues 22–32 the composition is skewed to polar residues; that stretch reads LNSQRNGSNLE. The active-site Nucleophile is the histidine 131. Lysine 133 serves as a coordination point for substrate. Positions 266–269 are interaction with DNA; it reads SIGS. The active-site Proton donor/acceptor is the histidine 356. Lysine 358 is a binding site for substrate.

The protein belongs to the tyrosyl-DNA phosphodiesterase family.

It localises to the nucleus. DNA repair enzyme that can remove a variety of covalent adducts from DNA through hydrolysis of a 3'-phosphodiester bond, giving rise to DNA with a free 3' phosphate. Catalyzes the hydrolysis of dead-end complexes between DNA and the topoisomerase I active site tyrosine residue. Hydrolyzes 3'-phosphoglycolates on protruding 3' ends on DNA double-strand breaks due to DNA damage by radiation and free radicals. Acts on blunt-ended double-strand DNA breaks and on single-stranded DNA. May have low 3'exonuclease activity and may be able to remove a single nucleoside from the 3'end of DNA and RNA molecules with 3'hydroxyl groups. Has no exonuclease activity towards DNA or RNA with a 3'phosphate. The protein is Probable tyrosyl-DNA phosphodiesterase of Caenorhabditis elegans.